The chain runs to 162 residues: MAPIAVGDVLPDGKLAYFDEQDQLQEVSVHSLVAGKKVILFGVPGAFTPTCSLKHVPGFIEKAGELKSKGVTEILCISVNDPFVMKAWAKSYPENKHVKFLADGSATYTHALGLELNLQEKGLGTRSRRFALLVDDLKVKAANIEGGGEFTVSSADDILKDL.

Residues 4 to 162 (IAVGDVLPDG…SSADDILKDL (159 aa)) enclose the Thioredoxin domain. Catalysis depends on cysteine 51, which acts as the Cysteine sulfenic acid (-SOH) intermediate.

This sequence belongs to the peroxiredoxin family. Prx5 subfamily. As to quaternary structure, monomer. Homodimer. Glutathionylation of C(P) causes the dimer to dissociate. Subsequent reduction of the mixed disulfide bond leads again to dimerization.

The enzyme catalyses [glutaredoxin]-dithiol + a hydroperoxide = [glutaredoxin]-disulfide + an alcohol + H2O. Functionally, thiol-specific peroxidase that catalyzes the reduction of hydrogen peroxide and organic hydroperoxides to water and alcohols, respectively. Can reduce H(2)O(2) and short chain organic, fatty acid, and phospholipid hydroperoxides. Plays a role in cell protection against oxidative stress by detoxifying peroxides. In Populus trichocarpa (Western balsam poplar), this protein is Peroxiredoxin-2.